The sequence spans 554 residues: Potassium/proton antiporter CemA (554 aa).

The helical transmembrane segment at 50-70 threads the bilayer; the sequence is SLFVVLFIPFFINIFTKIYVF. The insert stretch occupies residues 113-410; the sequence is KTENFFPEKP…VPYNFNKNTE (298 aa). Transmembrane regions (helical) follow at residues 429-449, 479-499, and 514-534; these read ISAITNLLADFMGLFILLFLL, MLLFTDLLVGFHSPRGWEVIF, and IIFLLVGTFPVLLDALFKYWI.

Belongs to the CemA family.

The protein resides in the plastid. It localises to the chloroplast inner membrane. The catalysed reaction is K(+)(in) + H(+)(out) = K(+)(out) + H(+)(in). In terms of biological role, contributes to K(+)/H(+) antiport activity by supporting proton efflux to control proton extrusion and homeostasis in chloroplasts in a light-dependent manner to modulate photosynthesis. Prevents excessive induction of non-photochemical quenching (NPQ) under continuous-light conditions. Indirectly promotes efficient inorganic carbon uptake into chloroplasts. This Stigeoclonium helveticum (Green alga) protein is Potassium/proton antiporter CemA.